The primary structure comprises 344 residues: Glyceraldehyde-3-phosphate dehydrogenase (344 aa).

NAD(+)-binding positions include 11–12 (TI) and Gly-110. Position 139 to 141 (139 to 141 (SCN)) interacts with D-glyceraldehyde 3-phosphate. The Nucleophile role is filled by Cys-140. Arg-169 serves as a coordination point for NAD(+). D-glyceraldehyde 3-phosphate is bound at residue 195 to 196 (HG). An NAD(+)-binding site is contributed by Gln-302.

Belongs to the glyceraldehyde-3-phosphate dehydrogenase family. In terms of assembly, homotetramer.

It localises to the cytoplasm. The enzyme catalyses D-glyceraldehyde 3-phosphate + phosphate + NADP(+) = (2R)-3-phospho-glyceroyl phosphate + NADPH + H(+). It catalyses the reaction D-glyceraldehyde 3-phosphate + phosphate + NAD(+) = (2R)-3-phospho-glyceroyl phosphate + NADH + H(+). It participates in carbohydrate degradation; glycolysis; pyruvate from D-glyceraldehyde 3-phosphate: step 1/5. The sequence is that of Glyceraldehyde-3-phosphate dehydrogenase from Pyrobaculum arsenaticum (strain DSM 13514 / JCM 11321 / PZ6).